Reading from the N-terminus, the 436-residue chain is Gamma-glutamyl phosphate reductase (436 aa).

It belongs to the gamma-glutamyl phosphate reductase family.

It localises to the cytoplasm. The enzyme catalyses L-glutamate 5-semialdehyde + phosphate + NADP(+) = L-glutamyl 5-phosphate + NADPH + H(+). It participates in amino-acid biosynthesis; L-proline biosynthesis; L-glutamate 5-semialdehyde from L-glutamate: step 2/2. Functionally, catalyzes the NADPH-dependent reduction of L-glutamate 5-phosphate into L-glutamate 5-semialdehyde and phosphate. The product spontaneously undergoes cyclization to form 1-pyrroline-5-carboxylate. In Prochlorococcus marinus (strain MIT 9515), this protein is Gamma-glutamyl phosphate reductase.